The primary structure comprises 206 residues: Pyridoxine/pyridoxamine 5'-phosphate oxidase (206 aa).

FMN is bound by residues 53 to 58 (RMVLLK), 68 to 69 (YT), K75, and Q97. K58 contacts substrate. Substrate is bound by residues Y115, R119, and S123. FMN contacts are provided by residues 132–133 (QS) and W177. 183–185 (RLH) is a substrate binding site. Position 187 (R187) interacts with FMN.

This sequence belongs to the pyridoxamine 5'-phosphate oxidase family. As to quaternary structure, homodimer. Requires FMN as cofactor.

It carries out the reaction pyridoxamine 5'-phosphate + O2 + H2O = pyridoxal 5'-phosphate + H2O2 + NH4(+). It catalyses the reaction pyridoxine 5'-phosphate + O2 = pyridoxal 5'-phosphate + H2O2. Its pathway is cofactor metabolism; pyridoxal 5'-phosphate salvage; pyridoxal 5'-phosphate from pyridoxamine 5'-phosphate: step 1/1. It participates in cofactor metabolism; pyridoxal 5'-phosphate salvage; pyridoxal 5'-phosphate from pyridoxine 5'-phosphate: step 1/1. Catalyzes the oxidation of either pyridoxine 5'-phosphate (PNP) or pyridoxamine 5'-phosphate (PMP) into pyridoxal 5'-phosphate (PLP). The chain is Pyridoxine/pyridoxamine 5'-phosphate oxidase from Agrobacterium fabrum (strain C58 / ATCC 33970) (Agrobacterium tumefaciens (strain C58)).